Reading from the N-terminus, the 207-residue chain is Urease accessory protein UreE (207 aa).

Positions 171–207 (HHGHAHSHSHSHDHDHDHDHDHQHGPGCAHGHGHDHH) are disordered. Residues 180 to 194 (HSHDHDHDHDHDHQH) show a composition bias toward basic and acidic residues.

Belongs to the UreE family.

Its subcellular location is the cytoplasm. Its function is as follows. Involved in urease metallocenter assembly. Binds nickel. Probably functions as a nickel donor during metallocenter assembly. In Burkholderia lata (strain ATCC 17760 / DSM 23089 / LMG 22485 / NCIMB 9086 / R18194 / 383), this protein is Urease accessory protein UreE.